The primary structure comprises 57 residues: Potassium channel toxin alpha-KTx 1.5 (57 aa).

The signal sequence occupies residues 1-20 (MKISFLLLALVICSIGWSEA). Q21 is subject to Pyrrolidone carboxylic acid. Disulfide bonds link C27-C48, C33-C53, and C37-C55.

Belongs to the short scorpion toxin superfamily. Potassium channel inhibitor family. Alpha-KTx 01 subfamily. In terms of tissue distribution, expressed by the venom gland.

Its subcellular location is the secreted. Potent blocker of both large-conductance calcium-activated potassium channels (KCa1.1/KCNMA1) and voltage-gated potassium channels (Kv1.3/KCNA3). Has also been shown to moderately inhibit Kv1.2/KCNA2 and weakly inhibit Kv1.1/KCNA1 channels, as well as 5-hydroxytryptamine 3 receptors (HTR3A). This Olivierus martensii (Manchurian scorpion) protein is Potassium channel toxin alpha-KTx 1.5.